Here is a 240-residue protein sequence, read N- to C-terminus: Protein FANTASTIC FOUR 2 (240 aa).

Disordered regions lie at residues 89-124 (TTPR…PPIK) and 177-229 (LLSH…KPML). One can recognise an FAF domain in the interval 117–171 (NSFPPPIKFVEDSKYNRMVRWLGEDGRIVVQAIRVSSPPSCFVSERGEGRLRLIL). The segment covering 184–200 (EEEEEETEEGIDEETSE) has biased composition (acidic residues). Basic residues predominate over residues 207-216 (GNKKFSRFSR). The span at 217–226 (RCKENGREPK) shows a compositional bias: basic and acidic residues.

This sequence belongs to the fantastic four family. Expressed in the shoot apex, stamens, carpels and young siliques. Detected in provascular and vascular tissue, and in the center of the vegetative and inflorescence meristems. Expressed in the funiculus. In roots and leaves, predominantly expressed in phloem.

In terms of biological role, regulates the size of the shoot meristem by modulating the CLV3-WUS feedback loop. Can repress WUS but is under negative control by CLV3. This is Protein FANTASTIC FOUR 2 (FAF2) from Arabidopsis thaliana (Mouse-ear cress).